Consider the following 226-residue polypeptide: Xanthocillin biosynthesis cluster protein F (226 aa).

It functions in the pathway secondary metabolite biosynthesis. In terms of biological role, part of the gene cluster that mediates the biosynthesis of the isocyanide xanthocillin and its derivatives. The first step of the pathway consists in the conversion of tyrosine into a vinyl-isonitrile intermediate by the isocyanide synthase xanB. Subsequent oxidative dimerization of this intermediate to form xanthocillin may involve the cytochrome P450 monooxygenase xanG, whose expression is coregulated with that of XanB. Xanthocillin can be further modified by the isonitrile hydratase-like protein xanA which introduces N-formyl groups and the methyltransferase xanE which introduces methyl groups, leading to the production of several derivatives including fumiformamide. Finally, fumiformamide can be subject to both oxidative and reductive cyclization to yield melanocins E and F, respectively. The chain is Xanthocillin biosynthesis cluster protein F from Aspergillus fumigatus (strain ATCC MYA-4609 / CBS 101355 / FGSC A1100 / Af293) (Neosartorya fumigata).